The sequence spans 189 residues: Lipid A acyltransferase PagP (189 aa).

The first 23 residues, 1-23 (MRLKLILYFLILSCYLGIGSARA), serve as a signal peptide directing secretion. Active-site residues include His61, Asp104, and Ser105.

It belongs to the lipid A palmitoyltransferase family. As to quaternary structure, homodimer.

The protein localises to the cell outer membrane. It carries out the reaction a lipid A + a 1,2-diacyl-sn-glycero-3-phosphocholine = a hepta-acyl lipid A + a 2-acyl-sn-glycero-3-phosphocholine. The catalysed reaction is a lipid IVA + a 1,2-diacyl-sn-glycero-3-phosphocholine = a lipid IVB + a 2-acyl-sn-glycero-3-phosphocholine. It catalyses the reaction a lipid IIA + a 1,2-diacyl-sn-glycero-3-phosphocholine = a lipid IIB + a 2-acyl-sn-glycero-3-phosphocholine. In terms of biological role, transfers a fatty acid residue from the sn-1 position of a phospholipid to the N-linked hydroxyfatty acid chain on the proximal unit of lipid A or its precursors. The protein is Lipid A acyltransferase PagP of Erwinia tasmaniensis (strain DSM 17950 / CFBP 7177 / CIP 109463 / NCPPB 4357 / Et1/99).